Here is a 311-residue protein sequence, read N- to C-terminus: Ribosomal RNA small subunit methyltransferase H (311 aa).

S-adenosyl-L-methionine contacts are provided by residues 33–35, aspartate 53, phenylalanine 80, aspartate 101, and glutamine 108; that span reads AGH.

Belongs to the methyltransferase superfamily. RsmH family.

Its subcellular location is the cytoplasm. It catalyses the reaction cytidine(1402) in 16S rRNA + S-adenosyl-L-methionine = N(4)-methylcytidine(1402) in 16S rRNA + S-adenosyl-L-homocysteine + H(+). Its function is as follows. Specifically methylates the N4 position of cytidine in position 1402 (C1402) of 16S rRNA. In Alkaliphilus oremlandii (strain OhILAs) (Clostridium oremlandii (strain OhILAs)), this protein is Ribosomal RNA small subunit methyltransferase H.